The sequence spans 110 residues: uncharacterized protein (110 aa).

It to M.jannaschii MJ1213 and A.aeolicus AA15.

This is an uncharacterized protein from Methanocaldococcus jannaschii (strain ATCC 43067 / DSM 2661 / JAL-1 / JCM 10045 / NBRC 100440) (Methanococcus jannaschii).